The following is a 410-amino-acid chain: Acyl-CoA-binding domain-containing protein 5-B (410 aa).

The region spanning 12–101 (AQKRFEAAVK…IQLIIETLPV (90 aa)) is the ACB domain. Residues 23–32 (IRSLPEDGSY), 43–47 (YSYYK), Lys-69, and Tyr-88 each bind an acyl-CoA. The span at 119 to 128 (VEDDDDDDDE) shows a compositional bias: acidic residues. Disordered regions lie at residues 119–165 (VEDD…LDDY), 221–242 (SDDE…GSGV), and 254–320 (GANM…DRMD). The stretch at 326-355 (TQITTILSELEDNMQDVLRRLTTLEQLTAS) forms a coiled coil. The segment at 382 to 404 (SPFTAVLTVLWPFAVHWLVQFYL) is a transmembrane helix.

The protein resides in the membrane. Functionally, binds medium- and long-chain acyl-CoA esters. The chain is Acyl-CoA-binding domain-containing protein 5-B (acbd5b) from Danio rerio (Zebrafish).